Here is a 158-residue protein sequence, read N- to C-terminus: Endoribonuclease YbeY (158 aa).

The Zn(2+) site is built by H117, H121, and H127.

This sequence belongs to the endoribonuclease YbeY family. The cofactor is Zn(2+).

It is found in the cytoplasm. In terms of biological role, single strand-specific metallo-endoribonuclease involved in late-stage 70S ribosome quality control and in maturation of the 3' terminus of the 16S rRNA. The polypeptide is Endoribonuclease YbeY (Francisella philomiragia subsp. philomiragia (strain ATCC 25017 / CCUG 19701 / FSC 153 / O#319-036)).